Consider the following 216-residue polypeptide: MAGYRADEEYDYLFKLVLIGDSGVGKSNLLSRFTKNEFNLESKSTIGVEFATKTTKVEGKVVKAQIWDTAGQERYRAITSAYYRGAVGALLIYDVTRHATFENAARWLRELRGHTDPNIVVMLIGNKCDLRHLVAVKTEEAKAFAERESLYFMETSALDATNVENAFTEVLTQIHKIVSKRSVDGGGESADLPGKGETINVKEDGSVLKRMGCCSN.

20–27 (GDSGVGKS) contributes to the GTP binding site. Positions 42–50 (SKSTIGVEF) match the Effector region motif. GTP-binding positions include 68–72 (DTAGQ), 126–129 (NKCD), and 156–157 (SA). Residues Cys213 and Cys214 are each lipidated (S-geranylgeranyl cysteine).

This sequence belongs to the small GTPase superfamily. Rab family.

The protein resides in the cell membrane. Its function is as follows. Involved in auxin-mediated response. May be involved in vesicle trafficking of components involved in polar auxin transport. Binds GTP and GDP and possesses intrinsic GTPase activity. This chain is Ras-related protein RABA1a (RABA1A), found in Arabidopsis thaliana (Mouse-ear cress).